The sequence spans 208 residues: Uracil phosphoribosyltransferase (208 aa).

Residues arginine 78, arginine 103, and 130-138 (DPMLATGGT) contribute to the 5-phospho-alpha-D-ribose 1-diphosphate site. Residues isoleucine 193 and 198–200 (GDA) each bind uracil. Residue aspartate 199 coordinates 5-phospho-alpha-D-ribose 1-diphosphate.

It belongs to the UPRTase family. Mg(2+) serves as cofactor.

The catalysed reaction is UMP + diphosphate = 5-phospho-alpha-D-ribose 1-diphosphate + uracil. Its pathway is pyrimidine metabolism; UMP biosynthesis via salvage pathway; UMP from uracil: step 1/1. Allosterically activated by GTP. Functionally, catalyzes the conversion of uracil and 5-phospho-alpha-D-ribose 1-diphosphate (PRPP) to UMP and diphosphate. The sequence is that of Uracil phosphoribosyltransferase from Nitratidesulfovibrio vulgaris (strain ATCC 29579 / DSM 644 / CCUG 34227 / NCIMB 8303 / VKM B-1760 / Hildenborough) (Desulfovibrio vulgaris).